A 445-amino-acid polypeptide reads, in one-letter code: uncharacterized protein (445 aa).

The next 8 helical transmembrane spans lie at 16-36 (IVSLGVTASSFLFINGVAFLI), 52-72 (LLASMPSWGLVVTMFAWGYLL), 98-118 (VHSLLWIGVFLFLGGMAAGGC), 168-188 (GLMFPAVVCTLAAVASVLGIV), 219-239 (ASALLMMPQTVTVTFMLVWLI), 243-263 (GWSVAQAGVLVTISQLLGALG), 283-303 (LIAAAAAATLFLLAAVDNEGS), and 366-386 (AAYPTAWALCGVFPLAAVPLV). The interval 417–445 (AWPNGPRRPGPPGQPRRVRQGGTAITPPT) is disordered.

It belongs to the major facilitator superfamily.

It localises to the cell membrane. This is an uncharacterized protein from Mycobacterium tuberculosis (strain CDC 1551 / Oshkosh).